Here is a 274-residue protein sequence, read N- to C-terminus: Sulfur carrier protein FdhD (274 aa).

The active-site Cysteine persulfide intermediate is the C121. A Mo-bis(molybdopterin guanine dinucleotide)-binding site is contributed by 258 to 263 (FSKPGR).

It belongs to the FdhD family.

The protein localises to the cytoplasm. Required for formate dehydrogenase (FDH) activity. Acts as a sulfur carrier protein that transfers sulfur from IscS to the molybdenum cofactor prior to its insertion into FDH. In Yersinia pseudotuberculosis serotype O:1b (strain IP 31758), this protein is Sulfur carrier protein FdhD.